The sequence spans 388 residues: 2-methylene-furan-3-one reductase (388 aa).

A chloroplast-targeting transit peptide spans 1–60 (MEALLSSTTLQLKPLHPPSSFSSLHSPFSSISVLRVKGSKKAETFIQRSNFSTVLPLRVS). NADP(+) is bound by residues Lys-125, 240–241 (GV), 263–266 (STGK), Tyr-281, 330–332 (FVV), and 377–378 (RA). Residue Lys-125 coordinates substrate.

Belongs to the zinc-containing alcohol dehydrogenase family. Quinone oxidoreductase subfamily. In terms of assembly, monomer.

The protein localises to the plastid. The protein resides in the chloroplast. The enzyme catalyses 4-hydroxy-2,5-dimethyl-furan-3(2H)-one + NADP(+) = 4-hydroxy-5-methyl-2-methylenefuran-3(2H)-one + NADPH + H(+). In terms of biological role, enone oxidoreductase involved in the biosynthesis of 4-hydroxy-2,5-dimethyl-3(2H)-furanone (HDMF or furaneol). Can use both NADH and NADPH as the electron donor. The protein is 2-methylene-furan-3-one reductase (EO) of Solanum lycopersicum (Tomato).